We begin with the raw amino-acid sequence, 218 residues long: Phosphoenolpyruvate guanylyltransferase (218 aa).

Residues threonine 151, glycine 166, and serine 169 each coordinate phosphoenolpyruvate.

This sequence belongs to the CofC family.

It catalyses the reaction phosphoenolpyruvate + GTP + H(+) = enolpyruvoyl-2-diphospho-5'-guanosine + diphosphate. It participates in cofactor biosynthesis; coenzyme F420 biosynthesis. Its function is as follows. Guanylyltransferase that catalyzes the activation of phosphoenolpyruvate (PEP) as enolpyruvoyl-2-diphospho-5'-guanosine, via the condensation of PEP with GTP. It is involved in the biosynthesis of coenzyme F420, a hydride carrier cofactor. The sequence is that of Phosphoenolpyruvate guanylyltransferase from Mycobacterium sp. (strain KMS).